The sequence spans 165 residues: Regulator of ribonuclease activity A (165 aa).

Belongs to the RraA family. As to quaternary structure, homotrimer. Binds to both RNA-binding sites in the C-terminal region of Rne and to RhlB.

It localises to the cytoplasm. Functionally, globally modulates RNA abundance by binding to RNase E (Rne) and regulating its endonucleolytic activity. Can modulate Rne action in a substrate-dependent manner by altering the composition of the degradosome. Modulates RNA-binding and helicase activities of the degradosome. In Haemophilus ducreyi (strain 35000HP / ATCC 700724), this protein is Regulator of ribonuclease activity A.